The following is a 112-amino-acid chain: Class I hydrophobin 17 (112 aa).

Residues 1–19 form the signal peptide; the sequence is MYSQSMVLLAAAFASFVAA. 4 disulfide bridges follow: Cys30-Cys90, Cys37-Cys84, Cys38-Cys74, and Cys91-Cys104. Residue Asn108 is glycosylated (N-linked (GlcNAc...) asparagine).

Belongs to the fungal hydrophobin family. In terms of assembly, self-assembles to form functional amyloid fibrils called rodlets. Self-assembly into fibrillar rodlets occurs spontaneously at hydrophobic:hydrophilic interfaces and the rodlets further associate laterally to form amphipathic monolayers.

It localises to the secreted. The protein localises to the cell wall. Functionally, aerial growth, conidiation, and dispersal of filamentous fungi in the environment rely upon a capability of their secreting small amphipathic proteins called hydrophobins (HPBs) with low sequence identity. Class I can self-assemble into an outermost layer of rodlet bundles on aerial cell surfaces, conferring cellular hydrophobicity that supports fungal growth, development and dispersal; whereas Class II form highly ordered films at water-air interfaces through intermolecular interactions but contribute nothing to the rodlet structure. Hydph17 is a class I hydrophobin involved in mycelial growth. This is Class I hydrophobin 17 from Pleurotus ostreatus (strain PC15) (Oyster mushroom).